The following is a 261-amino-acid chain: Cytochrome c oxidase subunit 3 (261 aa).

The Mitochondrial matrix segment spans residues 1–15 (MTHQTHAYHMVNPSP). Residues 16–34 (WPLTGALSALLMTSGLIMW) form a helical membrane-spanning segment. The Mitochondrial intermembrane portion of the chain corresponds to 35–40 (FHFNST). A helical membrane pass occupies residues 41-66 (TLLMLGLTTNMLTMYQWWRDVIREST). Residues 67 to 72 (FQGHHT) lie on the Mitochondrial matrix side of the membrane. Residues 73–105 (PNVQKGLRYGMILFIISEVLFFTGFFWAFYHSS) traverse the membrane as a helical segment. Topologically, residues 106–128 (LAPTPELGGCWPPTGINPLNPLE) are mitochondrial intermembrane. The helical transmembrane segment at 129-152 (VPLLNTSVLLASGVSITWAHHSLM) threads the bilayer. Over 153-155 (EGN) the chain is Mitochondrial matrix. The chain crosses the membrane as a helical span at residues 156 to 183 (RNHMLQALFITIALGVYFTLLQASEYYE). Residues 184–190 (APFTISD) lie on the Mitochondrial intermembrane side of the membrane. Residues 191–223 (GVYGSTFFVATGFHGLHVIIGSTFLIVCFFRQL) traverse the membrane as a helical segment. The Mitochondrial matrix segment spans residues 224–232 (KFHFTSNHH). The helical transmembrane segment at 233–256 (FGFEAAAWYWHFVDVVWLFLYVSI) threads the bilayer. Over 257 to 261 (YWWGS) the chain is Mitochondrial intermembrane.

This sequence belongs to the cytochrome c oxidase subunit 3 family. Component of the cytochrome c oxidase (complex IV, CIV), a multisubunit enzyme composed of 14 subunits. The complex is composed of a catalytic core of 3 subunits MT-CO1, MT-CO2 and MT-CO3, encoded in the mitochondrial DNA, and 11 supernumerary subunits COX4I, COX5A, COX5B, COX6A, COX6B, COX6C, COX7A, COX7B, COX7C, COX8 and NDUFA4, which are encoded in the nuclear genome. The complex exists as a monomer or a dimer and forms supercomplexes (SCs) in the inner mitochondrial membrane with NADH-ubiquinone oxidoreductase (complex I, CI) and ubiquinol-cytochrome c oxidoreductase (cytochrome b-c1 complex, complex III, CIII), resulting in different assemblies (supercomplex SCI(1)III(2)IV(1) and megacomplex MCI(2)III(2)IV(2)).

It localises to the mitochondrion inner membrane. The enzyme catalyses 4 Fe(II)-[cytochrome c] + O2 + 8 H(+)(in) = 4 Fe(III)-[cytochrome c] + 2 H2O + 4 H(+)(out). Its function is as follows. Component of the cytochrome c oxidase, the last enzyme in the mitochondrial electron transport chain which drives oxidative phosphorylation. The respiratory chain contains 3 multisubunit complexes succinate dehydrogenase (complex II, CII), ubiquinol-cytochrome c oxidoreductase (cytochrome b-c1 complex, complex III, CIII) and cytochrome c oxidase (complex IV, CIV), that cooperate to transfer electrons derived from NADH and succinate to molecular oxygen, creating an electrochemical gradient over the inner membrane that drives transmembrane transport and the ATP synthase. Cytochrome c oxidase is the component of the respiratory chain that catalyzes the reduction of oxygen to water. Electrons originating from reduced cytochrome c in the intermembrane space (IMS) are transferred via the dinuclear copper A center (CU(A)) of subunit 2 and heme A of subunit 1 to the active site in subunit 1, a binuclear center (BNC) formed by heme A3 and copper B (CU(B)). The BNC reduces molecular oxygen to 2 water molecules using 4 electrons from cytochrome c in the IMS and 4 protons from the mitochondrial matrix. The chain is Cytochrome c oxidase subunit 3 (MT-CO3) from Gazella subgutturosa (Goitred gazelle).